The chain runs to 470 residues: Arginine ADP-riboxanase OspC1 (470 aa).

Residues His138, Gln139, Ser140, Leu144, Ile157, Asn167, Phe183, His201, Phe206, Asp226, and Glu320 each coordinate NAD(+). Glu320 is an active-site residue. 3 ANK repeats span residues 363–392 (IALQALFLSITNQKEDVALYILSNFEITRQ), 399–431 (HELYDIEYLLSAHNSSCKVLEYFINKGLVDVNT), and 438–467 (SGDCMLDNAIKYENAEMIKLLLKYGATSDN).

Belongs to the OspC family. Interacts with host calmodulin (CALM1, CALM2 and/or CALM3); specifically interacts with the apo form of calmodulin, preventing calcium-binding.

The protein localises to the secreted. The protein resides in the host nucleus. The catalysed reaction is L-arginyl-[protein] + NAD(+) = ADP-riboxanated L-argininyl-[protein] + nicotinamide + NH4(+) + H(+). Functionally, ADP-riboxanase effector that mediates arginine ADP-riboxanation of host caspases. ADP-riboxanation of host apoptotic caspases (CASP3, CASP8 and CASP9) prevents their activation, thereby inhibiting host cell extrinsic and intrinsic apoptosis. Does not catalyze ADP-riboxanation of host CASP4/CASP11. Independently of its ADP-riboxanase activity, acts as an inhibitor of calcium signaling by inhibiting host calmodulin, preventing activation of the JAK-STAT signaling pathway in response to interferon-beta. Mechanistically, acts by binding to the apo form of calmodulin, preventing calcium-binding and ability to activate host CaMK2 (CAMKII), which is required to stimulate the JAK-STAT signaling pathway in response to interferon-beta. In Shigella flexneri, this protein is Arginine ADP-riboxanase OspC1.